The chain runs to 399 residues: tRNA-specific 2-thiouridylase MnmA (399 aa).

ATP contacts are provided by residues 21 to 28 (AMSGGVDS) and Leu47. Residue Cys115 is the Nucleophile of the active site. Cys115 and Cys211 are disulfide-bonded. Gly139 contributes to the ATP binding site. The interaction with tRNA stretch occupies residues 161 to 163 (RDQ). Catalysis depends on Cys211, which acts as the Cysteine persulfide intermediate.

It belongs to the MnmA/TRMU family.

It localises to the cytoplasm. The catalysed reaction is S-sulfanyl-L-cysteinyl-[protein] + uridine(34) in tRNA + AH2 + ATP = 2-thiouridine(34) in tRNA + L-cysteinyl-[protein] + A + AMP + diphosphate + H(+). Its function is as follows. Catalyzes the 2-thiolation of uridine at the wobble position (U34) of tRNA, leading to the formation of s(2)U34. This Parvibaculum lavamentivorans (strain DS-1 / DSM 13023 / NCIMB 13966) protein is tRNA-specific 2-thiouridylase MnmA.